The chain runs to 189 residues: NADH-quinone oxidoreductase subunit B (189 aa).

Residues C39, C40, C104, and C135 each contribute to the [4Fe-4S] cluster site.

Belongs to the complex I 20 kDa subunit family. As to quaternary structure, NDH-1 is composed of 14 different subunits. Subunits NuoB, C, D, E, F, and G constitute the peripheral sector of the complex. [4Fe-4S] cluster serves as cofactor.

Its subcellular location is the cell inner membrane. It carries out the reaction a quinone + NADH + 5 H(+)(in) = a quinol + NAD(+) + 4 H(+)(out). NDH-1 shuttles electrons from NADH, via FMN and iron-sulfur (Fe-S) centers, to quinones in the respiratory chain. The immediate electron acceptor for the enzyme in this species is believed to be a menaquinone. Couples the redox reaction to proton translocation (for every two electrons transferred, four hydrogen ions are translocated across the cytoplasmic membrane), and thus conserves the redox energy in a proton gradient. The polypeptide is NADH-quinone oxidoreductase subunit B (Chlorobaculum tepidum (strain ATCC 49652 / DSM 12025 / NBRC 103806 / TLS) (Chlorobium tepidum)).